Reading from the N-terminus, the 611-residue chain is Methionine--tRNA ligase (611 aa).

Positions 12-22 (PYANGPRHIGH) match the 'HIGH' region motif. Zn(2+)-binding residues include Cys-144, Cys-147, Cys-157, and Cys-160. The short motif at 348-352 (KFSSS) is the 'KMSKS' region element. Ser-351 provides a ligand contact to ATP.

This sequence belongs to the class-I aminoacyl-tRNA synthetase family. MetG type 1 subfamily. Monomer. It depends on Zn(2+) as a cofactor.

It is found in the cytoplasm. The enzyme catalyses tRNA(Met) + L-methionine + ATP = L-methionyl-tRNA(Met) + AMP + diphosphate. In terms of biological role, is required not only for elongation of protein synthesis but also for the initiation of all mRNA translation through initiator tRNA(fMet) aminoacylation. The polypeptide is Methionine--tRNA ligase (Corynebacterium urealyticum (strain ATCC 43042 / DSM 7109)).